The following is a 666-amino-acid chain: Asperfuranone cluster transcription factor afoA (666 aa).

Residues 16 to 43 (CEECRRRKARCDRVRPKCGFCTENELQC) constitute a DNA-binding region (zn(2)-C6 fungal-type). Disordered regions lie at residues 184–206 (LSFD…STTR) and 347–373 (AGSD…GENA). Residues 353–369 (LSPPSSSPPSSLTLSPS) show a composition bias toward low complexity.

Its subcellular location is the nucleus. Functionally, transcription factor that regulates the expression of the gene cluster that mediates the biosynthesis of asperfuranone, a probable antitumor agent. This Emericella nidulans (strain FGSC A4 / ATCC 38163 / CBS 112.46 / NRRL 194 / M139) (Aspergillus nidulans) protein is Asperfuranone cluster transcription factor afoA.